The primary structure comprises 244 residues: Mediator of RNA polymerase II transcription subunit 19 (244 aa).

2 disordered regions span residues 1–56 (MENF…PGAD) and 171–244 (PKKK…SSLR). The segment covering 26 to 47 (GKPPPPPPPPAGGGPGTAPPPT) has biased composition (pro residues). The segment covering 171–182 (PKKKNKHKHKQS) has biased composition (basic residues). Residue S194 is modified to Phosphoserine. The span at 212–224 (KRKKKEKKKKKNR) shows a compositional bias: basic residues. S226 carries the phosphoserine modification. Over residues 234-244 (SSQASSSSSLR) the composition is skewed to low complexity.

It belongs to the Mediator complex subunit 19 family. In terms of assembly, component of the Mediator complex, which is composed of MED1, MED4, MED6, MED7, MED8, MED9, MED10, MED11, MED12, MED13, MED13L, MED14, MED15, MED16, MED17, MED18, MED19, MED20, MED21, MED22, MED23, MED24, MED25, MED26, MED27, MED29, MED30, MED31, CCNC, CDK8 and CDC2L6/CDK11. The MED12, MED13, CCNC and CDK8 subunits form a distinct module termed the CDK8 module. Mediator containing the CDK8 module is less active than Mediator lacking this module in supporting transcriptional activation. Individual preparations of the Mediator complex lacking one or more distinct subunits have been variously termed ARC, CRSP, DRIP, PC2, SMCC and TRAP.

Its subcellular location is the nucleus. In terms of biological role, component of the Mediator complex, a coactivator involved in the regulated transcription of nearly all RNA polymerase II-dependent genes. Mediator functions as a bridge to convey information from gene-specific regulatory proteins to the basal RNA polymerase II transcription machinery. Mediator is recruited to promoters by direct interactions with regulatory proteins and serves as a scaffold for the assembly of a functional preinitiation complex with RNA polymerase II and the general transcription factors. The protein is Mediator of RNA polymerase II transcription subunit 19 (MED19) of Homo sapiens (Human).